The following is a 342-amino-acid chain: N-acetyl-gamma-glutamyl-phosphate reductase (342 aa).

The active site involves C149.

The protein belongs to the NAGSA dehydrogenase family. Type 1 subfamily.

The protein resides in the cytoplasm. It carries out the reaction N-acetyl-L-glutamate 5-semialdehyde + phosphate + NADP(+) = N-acetyl-L-glutamyl 5-phosphate + NADPH + H(+). Its pathway is amino-acid biosynthesis; L-arginine biosynthesis; N(2)-acetyl-L-ornithine from L-glutamate: step 3/4. Functionally, catalyzes the NADPH-dependent reduction of N-acetyl-5-glutamyl phosphate to yield N-acetyl-L-glutamate 5-semialdehyde. In Roseobacter denitrificans (strain ATCC 33942 / OCh 114) (Erythrobacter sp. (strain OCh 114)), this protein is N-acetyl-gamma-glutamyl-phosphate reductase.